Here is a 130-residue protein sequence, read N- to C-terminus: Small ribosomal subunit protein uS9 (130 aa).

The protein belongs to the universal ribosomal protein uS9 family.

The polypeptide is Small ribosomal subunit protein uS9 (Geotalea daltonii (strain DSM 22248 / JCM 15807 / FRC-32) (Geobacter daltonii)).